Reading from the N-terminus, the 592-residue chain is V-type ATP synthase alpha chain (592 aa).

232-239 (GPFGSGKT) provides a ligand contact to ATP.

This sequence belongs to the ATPase alpha/beta chains family.

The enzyme catalyses ATP + H2O + 4 H(+)(in) = ADP + phosphate + 5 H(+)(out). Produces ATP from ADP in the presence of a proton gradient across the membrane. The V-type alpha chain is a catalytic subunit. The sequence is that of V-type ATP synthase alpha chain from Clostridioides difficile (strain 630) (Peptoclostridium difficile).